The chain runs to 94 residues: Co-chaperonin GroES (94 aa).

The protein belongs to the GroES chaperonin family. In terms of assembly, heptamer of 7 subunits arranged in a ring. Interacts with the chaperonin GroEL.

It localises to the cytoplasm. Functionally, together with the chaperonin GroEL, plays an essential role in assisting protein folding. The GroEL-GroES system forms a nano-cage that allows encapsulation of the non-native substrate proteins and provides a physical environment optimized to promote and accelerate protein folding. GroES binds to the apical surface of the GroEL ring, thereby capping the opening of the GroEL channel. This chain is Co-chaperonin GroES, found in Ehrlichia ruminantium (strain Gardel).